We begin with the raw amino-acid sequence, 235 residues long: KWSSKSPGNYDYPAPQGREAVISEVEQAQEEEEEEASVEFALSSDIEDDYEPELLLVPEGQPVNQPMLAAAQSLHREATKWSSKGNDIIAAAKRMALLMAEMSRLVRGGSGNKRALIQCAKDIAKASDEVTKLAKEVAKQCTDKRIRTNLLQVCERIPTISTQLKILSTVKATMLGRTNISDEESEQATEMLVHNAQNLMQSVKETVREAEAASIKIRTDAGFTLRWARKTPWYQ.

Belongs to the vinculin/alpha-catenin family. As to quaternary structure, exhibits self-association properties. Post-translationally, phosphorylated on serines, threonines and tyrosines. In terms of processing, acetylated by myristic acid and/or palmitic acid.

It localises to the cell membrane. Its subcellular location is the cell junction. It is found in the adherens junction. The protein localises to the focal adhesion. The protein resides in the cytoplasm. It localises to the cytoskeleton. Its subcellular location is the sarcolemma. It is found in the cell projection. The protein localises to the podosome. Functionally, involved in cell adhesion. May be involved in the attachment of the actin-based microfilaments to the plasma membrane. In Xenopus laevis (African clawed frog), this protein is Vinculin (vcl).